We begin with the raw amino-acid sequence, 170 residues long: Cyclic pyranopterin monophosphate synthase 1 (170 aa).

Residues L79–H81 and M116–E117 contribute to the substrate site. The active site involves D131.

The protein belongs to the MoaC family. In terms of assembly, homohexamer; trimer of dimers.

It catalyses the reaction (8S)-3',8-cyclo-7,8-dihydroguanosine 5'-triphosphate = cyclic pyranopterin phosphate + diphosphate. It functions in the pathway cofactor biosynthesis; molybdopterin biosynthesis. In terms of biological role, catalyzes the conversion of (8S)-3',8-cyclo-7,8-dihydroguanosine 5'-triphosphate to cyclic pyranopterin monophosphate (cPMP). The protein is Cyclic pyranopterin monophosphate synthase 1 (moaC1) of Mycobacterium bovis (strain ATCC BAA-935 / AF2122/97).